A 637-amino-acid polypeptide reads, in one-letter code: Chaperone protein DnaK (637 aa).

Thr196 is subject to Phosphothreonine; by autocatalysis. The disordered stretch occupies residues 598 to 637 (AEAPGADAPEGQAPQDGGSKKGGEGAVENAEYEVIDGDGK). The span at 627-637 (AEYEVIDGDGK) shows a compositional bias: acidic residues.

This sequence belongs to the heat shock protein 70 family.

Functionally, acts as a chaperone. This Chlorobium luteolum (strain DSM 273 / BCRC 81028 / 2530) (Pelodictyon luteolum) protein is Chaperone protein DnaK.